A 514-amino-acid chain; its full sequence is Prolyl 3,4-dihydroxylase OGFOD1 (514 aa).

Positions 114 to 221 (GAVDCSCNIY…RVSISGWFHT (108 aa)) constitute a Fe2OG dioxygenase domain. Fe cation-binding residues include His-132 and Asp-134. Tyr-146 contacts 2-oxoglutarate. His-200 contributes to the Fe cation binding site. A 2-oxoglutarate-binding site is contributed by Arg-212.

Belongs to the TPA1 family. In terms of assembly, monomer and homodimer. Fe(2+) is required as a cofactor. Requires L-ascorbate as cofactor.

It catalyses the reaction [ribosomal protein uS12]-L-proline + 2-oxoglutarate + O2 = [ribosomal protein uS12]-(3S)-3-hydroxy-L-proline + succinate + CO2. The enzyme catalyses [ribosomal protein uS12]-(3S)-3-hydroxy-L-proline + 2-oxoglutarate + O2 = [ribosomal protein uS12]-(3S)-3,4-dihydroxy-L-proline + succinate + CO2. Its function is as follows. Prolyl 3,4-dihydroxylase that catalyzes 3,4-dihydroxylation of 'Pro-61' of small ribosomal subunit uS12 (RPS23), thereby regulating protein translation termination efficiency. This chain is Prolyl 3,4-dihydroxylase OGFOD1 (Ogd), found in Ostreococcus tauri.